Reading from the N-terminus, the 512-residue chain is 2-isopropylmalate synthase (512 aa).

Residues 4-266 (IQFFDTTLRD…ETNIVLNQFK (263 aa)) enclose the Pyruvate carboxyltransferase domain. Residues D13, H201, H203, and N237 each contribute to the Mn(2+) site. Positions 390-512 (ELKHLQVQYV…SKQADFEEVK (123 aa)) are regulatory domain.

It belongs to the alpha-IPM synthase/homocitrate synthase family. LeuA type 1 subfamily. As to quaternary structure, homodimer. Mn(2+) serves as cofactor.

It localises to the cytoplasm. The catalysed reaction is 3-methyl-2-oxobutanoate + acetyl-CoA + H2O = (2S)-2-isopropylmalate + CoA + H(+). Its pathway is amino-acid biosynthesis; L-leucine biosynthesis; L-leucine from 3-methyl-2-oxobutanoate: step 1/4. Catalyzes the condensation of the acetyl group of acetyl-CoA with 3-methyl-2-oxobutanoate (2-ketoisovalerate) to form 3-carboxy-3-hydroxy-4-methylpentanoate (2-isopropylmalate). The protein is 2-isopropylmalate synthase of Listeria monocytogenes serotype 4a (strain HCC23).